A 225-amino-acid polypeptide reads, in one-letter code: Prepilin leader peptidase/N-methyltransferase (225 aa).

Topologically, residues Met-1–Thr-2 are periplasmic. A helical transmembrane segment spans residues Met-3–Ala-23. The Cytoplasmic segment spans residues Tyr-24–Cys-67. A helical membrane pass occupies residues Ala-68 to Leu-88. Residues Thr-89 to Lys-103 lie on the Periplasmic side of the membrane. Residues Leu-104 to Leu-124 form a helical membrane-spanning segment. The Cytoplasmic segment spans residues His-125 to Ala-127. The chain crosses the membrane as a helical span at residues Val-128–Val-148. Over Cys-149–Leu-174 the chain is Periplasmic. Residues Pro-175–Leu-195 form a helical membrane-spanning segment. Residues Gln-196–Thr-202 are Cytoplasmic-facing. A helical membrane pass occupies residues Ile-203–Ile-223. Residues Ser-224–Tyr-225 lie on the Periplasmic side of the membrane.

The protein belongs to the peptidase A24 family.

The protein resides in the cell inner membrane. The enzyme catalyses Typically cleaves a -Gly-|-Phe- bond to release an N-terminal, basic peptide of 5-8 residues from type IV prepilin, and then N-methylates the new N-terminal amino group, the methyl donor being S-adenosyl-L-methionine.. Its function is as follows. Plays a role in type II pseudopili formation by proteolytically removing the leader sequence from substrate proteins and subsequently monomethylating the alpha-amino group of the newly exposed N-terminal phenylalanine. Substrates include proteins required for biogenesis of the type II general secretory apparatus. This chain is Prepilin leader peptidase/N-methyltransferase (gspO), found in Escherichia coli (strain K12).